The sequence spans 436 residues: Transcription termination factor Rho (436 aa).

A Rho RNA-BD domain is found at 65–140; it reads LVFVKGVLEI…IRMESVNGLP (76 aa). ATP is bound by residues 185–190, 197–202, and arginine 228; these read GKGQRG and KAGKTV.

Belongs to the Rho family. In terms of assembly, homohexamer. The homohexamer assembles into an open ring structure.

Its function is as follows. Facilitates transcription termination by a mechanism that involves Rho binding to the nascent RNA, activation of Rho's RNA-dependent ATPase activity, and release of the mRNA from the DNA template. The chain is Transcription termination factor Rho from Aquifex aeolicus (strain VF5).